The primary structure comprises 336 residues: Dihydroorotate dehydrogenase (quinone) (336 aa).

Residues Ala-62 to Lys-66 and Thr-86 contribute to the FMN site. Substrate is bound at residue Lys-66. Asn-111–Phe-115 serves as a coordination point for substrate. The FMN site is built by Asn-139 and Asn-172. Asn-172 is a binding site for substrate. The active-site Nucleophile is the Ser-175. Asn-177 is a substrate binding site. FMN is bound by residues Lys-217 and Thr-245. Asn-246–Thr-247 is a binding site for substrate. Residues Gly-268, Gly-297, and Tyr-318 to Ser-319 contribute to the FMN site.

It belongs to the dihydroorotate dehydrogenase family. Type 2 subfamily. In terms of assembly, monomer. The cofactor is FMN.

The protein localises to the cell membrane. The enzyme catalyses (S)-dihydroorotate + a quinone = orotate + a quinol. The protein operates within pyrimidine metabolism; UMP biosynthesis via de novo pathway; orotate from (S)-dihydroorotate (quinone route): step 1/1. Functionally, catalyzes the conversion of dihydroorotate to orotate with quinone as electron acceptor. The chain is Dihydroorotate dehydrogenase (quinone) from Citrobacter koseri (strain ATCC BAA-895 / CDC 4225-83 / SGSC4696).